The chain runs to 381 residues: Class E basic helix-loop-helix protein 22 (381 aa).

Disordered regions lie at residues 30–94, 135–154, and 188–242; these read RLEA…GGGG, RGSVAESSGGEQSPDDDSDG, and HLHG…EQKA. A compositionally biased stretch (gly residues) spans 82-94; the sequence is GGGGGSAGSGGGG. Residues 198–225 show a composition bias toward gly residues; that stretch reads GGLGGGGGGGSSSGSSGGGGGSGSGSGG. Positions 242 to 296 constitute a bHLH domain; that stretch reads ALRLNINARERRRMHDLNDALDELRAVIPYAHSPSVRKLSKIATLLLAKNYILMQ.

As to quaternary structure, interacts with PRDM8. As to expression, brain-specific, with the highest expression in the cerebellum.

The protein resides in the nucleus. Inhibits DNA binding of TCF3/E47 homodimers and TCF3 (E47)/NEUROD1 heterodimers and acts as a strong repressor of Neurod1 and Myod-responsive genes, probably by heterodimerization with class a basic helix-loop-helix factors. Despite the presence of an intact basic domain, does not bind to DNA. In the brain, may function as an area-specific transcription factor that regulates the postmitotic acquisition of area identities and elucidate the genetic hierarchy between progenitors and postmitotic neurons driving neocortical arealization. May be required for the survival of a specific population of inhibitory neurons in the superficial laminae of the spinal cord dorsal horn that may regulate pruritis. Seems to play a crucial role in the retinogenesis, in the specification of amacrine and bipolar subtypes. Forms with PRDM8 a transcriptional repressor complex controlling genes involved in neural development and neuronal differentiation. This is Class E basic helix-loop-helix protein 22 (BHLHE22) from Homo sapiens (Human).